A 101-amino-acid chain; its full sequence is CYC02 protein (101 aa).

Residues 42–64 (DAVCHHGCCRWFHHRCVRCCRSA) form a 1; approximate repeat. The segment at 42–101 (DAVCHHGCCRWFHHRCVRCCRSAEEVSVSDTENNAAADAHCRHGCCRWFHGRCIRCCPSA) is 2 X approximate repeats. A 2; approximate repeat occupies 79 to 101 (DAHCRHGCCRWFHGRCIRCCPSA).

This sequence belongs to the GRP family.

Its function is as follows. May be involved in the control of the cell cycle at the G1/S start transition. This chain is CYC02 protein (CYC02), found in Catharanthus roseus (Madagascar periwinkle).